Here is a 447-residue protein sequence, read N- to C-terminus: MAFVVPAAPPRTPHKFYQILYVQVLVAIVAGVLLGHFYPDLGSALKPLGDAFIKLVKMIIAPVIFLTVVTGIAGLTDMQKVGRVAGKAMIYFLSFSTLALIIGMIVANVVHPGSGLNIDPASLDAKAVQTYTSHAHDQSLVGFLMNIIPSTPISAFASGDILQVLFFAVLFGIALATVGERGKPVLDLLNPLLQVVFRLVAIVMKAAPLGAFGAMAFTIGKYGIGSIANLAMLVGTFYLTSGLFVFVVLGLVARYNGFSLLALLRYIKEELLLVLGTSSSEAALPTLMEKLERAGCKKSVVGLVVPTGYSFNLDGTNIYMTLAALFIAQATNIDLSLQDQILLLLVAMLSSKGAAGITGAGFITLAATLSVVPSVPVAGMALILGVDRFMSECRALTNFIGNAVATIVVAKWEGELDRDRLALALKGGGKALLPLEHEAAIHIPSKV.

Transmembrane regions (helical) follow at residues 19 to 39 (ILYVQVLVAIVAGVLLGHFYP), 55 to 75 (LVKMIIAPVIFLTVVTGIAGL), 90 to 110 (IYFLSFSTLALIIGMIVANVV), 155 to 175 (AFASGDILQVLFFAVLFGIAL), 199 to 219 (LVAIVMKAAPLGAFGAMAFTI), 232 to 252 (MLVGTFYLTSGLFVFVVLGLV), 343 to 363 (LLLVAMLSSKGAAGITGAGFI), and 366 to 386 (AATLSVVPSVPVAGMALILGV).

It belongs to the dicarboxylate/amino acid:cation symporter (DAACS) (TC 2.A.23) family.

The protein localises to the cell inner membrane. Its function is as follows. Responsible for the transport of dicarboxylates such as succinate, fumarate, and malate from the periplasm across the membrane. The protein is C4-dicarboxylate transport protein of Rhodospirillum rubrum (strain ATCC 11170 / ATH 1.1.1 / DSM 467 / LMG 4362 / NCIMB 8255 / S1).